The following is a 304-amino-acid chain: Neurexophilin-4 (304 aa).

A signal peptide spans 1–23 (MRLLPEWLLLLFGPWLLRKVISG). The interval 24–84 (QIVESGRPQY…GALARPGAAG (61 aa)) is II. Residues asparagine 72, asparagine 133, asparagine 143, and asparagine 149 are each glycosylated (N-linked (GlcNAc...) asparagine). Positions 85–163 (GPPVPRTKRK…IVPPSKRVEF (79 aa)) are III. The IV (linker domain) stretch occupies residues 164-220 (GGVWLPGPAPHPLQSTLALEGVLPGLGPPLGMAGQGLGGNLGGALAGPLGGALGVPG). The segment at 221–304 (AKESRAFNCH…NFQSEHPYFG (84 aa)) is v (Cys-rich).

The protein belongs to the neurexophilin family. In terms of processing, may be proteolytically processed in neuron-like cells. In terms of tissue distribution, brain and kidney.

The protein resides in the secreted. Its function is as follows. May be signaling molecules that resemble neuropeptides and that act by binding to alpha-neurexins and possibly other receptors. The sequence is that of Neurexophilin-4 (Nxph4) from Rattus norvegicus (Rat).